A 715-amino-acid chain; its full sequence is Discoidin, CUB and LCCL domain-containing protein 1 (715 aa).

Positions 1 to 34 are cleaved as a signal peptide; sequence MVPGARGGGALARAAGRGLLALLLAVSAPLRLQA. The Extracellular portion of the chain corresponds to 35–459; it reads EELGDGCGHL…TSTGINITTV (425 aa). 2 disulfides stabilise this stretch: Cys-41-Cys-68 and Cys-94-Cys-112. The CUB domain maps to 41–150; it reads CGHLVTYQDS…RGFLLTYASS (110 aa). N-linked (GlcNAc...) asparagine glycosylation occurs at Asn-64. The N-linked (GlcNAc...) asparagine glycan is linked to Asn-124. The LCCL domain occupies 152–248; it reads HPDLITCLER…RDGSLSDKRF (97 aa). Cystine bridges form between Cys-158–Cys-174 and Cys-178–Cys-200. The region spanning 248 to 412 is the F5/8 type C domain; the sequence is FLFTSNGCSR…IALKVELIGC (165 aa). A glycan (N-linked (GlcNAc...) asparagine) is linked at Asn-277. The interval 278–312 is disordered; that stretch reads ESGDQVHWSPGQARLQDQGPSWASGDSSNNHKPRE. Residues 295 to 307 show a composition bias toward polar residues; the sequence is QGPSWASGDSSNN. Residues Asn-351, Asn-418, and Asn-455 are each glycosylated (N-linked (GlcNAc...) asparagine). Residues 460–480 traverse the membrane as a helical segment; the sequence is AIPLVLLVVLVFAGMGIFAAF. Residues 481–715 lie on the Cytoplasmic side of the membrane; that stretch reads RKKKKKGSPY…LNQTAMTALL (235 aa). Ser-513 carries the post-translational modification Phosphoserine. Residue Thr-614 is modified to Phosphothreonine. The tract at residues 619-702 is disordered; the sequence is SGYRVPGPQP…SDSYSAPRDC (84 aa).

The protein resides in the membrane. The chain is Discoidin, CUB and LCCL domain-containing protein 1 (DCBLD1) from Homo sapiens (Human).